The chain runs to 238 residues: Inactive glycoside hydrolase XLP1 (238 aa).

A signal peptide spans 1–19 (MKSFLIAIVIAVLLPVSAA). Residue glutamate 133 is part of the active site. N-linked (GlcNAc...) asparagine glycosylation is found at asparagine 171 and asparagine 187. Glutamate 219 is a catalytic residue.

This sequence belongs to the glycosyl hydrolase 12 (cellulase H) family. Interacts with host apoplastic glucanase inhibitor GIP2.

Its subcellular location is the secreted. Non-functional secreted XEG1-like protein that binds to host Nicotiana benthamiana apoplastic glucanase inhibitor protein GIP2 more tightly than does XEG1, thus it outcompetes XEG1 for GIP2 binding and frees functional XEG1 to support P.parasitica infection. With XEG1, is required to elevate apoplastic sugar during P.parasitica infection. In Phytophthora nicotianae (strain INRA-310) (Phytophthora parasitica), this protein is Inactive glycoside hydrolase XLP1.